Reading from the N-terminus, the 172-residue chain is Ubiquitin-conjugating enzyme E2 2 (172 aa).

One can recognise a UBC core domain in the interval 4-150; it reads PARRRLMRDF…VKETVEKSWE (147 aa). Residue Cys88 is the Glycyl thioester intermediate of the active site. Position 120 is a phosphoserine; by SGV1 (Ser120). The segment at 145–172 is disordered; that stretch reads VEKSWEDDMDDMDDDDDDDDDDDDDEAD. Positions 151 to 172 are enriched in acidic residues; it reads DDMDDMDDDDDDDDDDDDDEAD.

This sequence belongs to the ubiquitin-conjugating enzyme family. In terms of assembly, forms a heterodimer complexes with the E3 enzymes BRE1, RAD18 and UBR1. Also interacts with UBR2, RTF1, PAF1 and the RNA polymerase II hyperphosphorylated form. The interaction with RNA polymerase II is BRE1- and PAF1-dependent. The N-terminus is blocked.

The protein localises to the cytoplasm. It localises to the nucleus. The enzyme catalyses S-ubiquitinyl-[E1 ubiquitin-activating enzyme]-L-cysteine + [E2 ubiquitin-conjugating enzyme]-L-cysteine = [E1 ubiquitin-activating enzyme]-L-cysteine + S-ubiquitinyl-[E2 ubiquitin-conjugating enzyme]-L-cysteine.. It functions in the pathway protein modification; protein ubiquitination. Functionally, E2 ubiquitin-conjugating enzyme that accepts ubiquitin from the ubiquitin-activating enzyme E1 and transfers it to a E3 ubiquitin-protein ligase. In association with the E3 enzyme BRE1 and LGE1, it plays a role in transcription regulation by catalyzing the monoubiquitination of histone H2B to form H2BK123ub1. H2BK123ub1 gives a specific tag for epigenetic transcriptional activation, elongation by RNA polymerase II, telomeric silencing, and is also a prerequisite for H3K4me and H3K79me formation. In association with the E3 enzyme RAD18, it catalyzes the monoubiquitination of POL30 'Lys-164', involved in postreplication repair of UV-damaged DNA. The RAD6/UBC2-RAD18 complex is also involved in prevention of spontaneous mutations caused by 7,8-dihydro-8-oxoguanine. In association with the E3 enzyme UBR1, is involved in N-end rule-dependent protein degradation. Also involved in sporulation. The protein is Ubiquitin-conjugating enzyme E2 2 (RAD6) of Saccharomyces cerevisiae (strain ATCC 204508 / S288c) (Baker's yeast).